We begin with the raw amino-acid sequence, 126 residues long: Large ribosomal subunit protein bL12 (126 aa).

Belongs to the bacterial ribosomal protein bL12 family. Homodimer. Part of the ribosomal stalk of the 50S ribosomal subunit. Forms a multimeric L10(L12)X complex, where L10 forms an elongated spine to which 2 to 4 L12 dimers bind in a sequential fashion. Binds GTP-bound translation factors.

Its function is as follows. Forms part of the ribosomal stalk which helps the ribosome interact with GTP-bound translation factors. Is thus essential for accurate translation. This chain is Large ribosomal subunit protein bL12, found in Francisella tularensis subsp. mediasiatica (strain FSC147).